The following is a 478-amino-acid chain: Cytochrome c-552 (478 aa).

The first 26 residues, 1-26 (MARKTLRARRFFSLIFPFFFITSVYA), serve as a signal peptide directing secretion. Histidine 94 serves as a coordination point for heme c. Positions 122, 125, and 126 each coordinate heme. Residues cysteine 160, cysteine 163, histidine 164, cysteine 209, cysteine 212, and histidine 213 each contribute to the heme c site. 4 residues coordinate Ca(2+): glutamate 215, tyrosine 216, lysine 261, and glutamine 263. Tyrosine 216 lines the substrate pocket. Position 264 (histidine 264) interacts with substrate. Histidine 275, cysteine 282, cysteine 285, histidine 286, histidine 301, cysteine 314, cysteine 317, histidine 318, and histidine 393 together coordinate heme c.

The protein belongs to the cytochrome c-552 family. Ca(2+) serves as cofactor. It depends on heme c as a cofactor.

The protein resides in the periplasm. The enzyme catalyses 6 Fe(III)-[cytochrome c] + NH4(+) + 2 H2O = 6 Fe(II)-[cytochrome c] + nitrite + 8 H(+). It functions in the pathway nitrogen metabolism; nitrate reduction (assimilation). In terms of biological role, catalyzes the reduction of nitrite to ammonia, consuming six electrons in the process. The polypeptide is Cytochrome c-552 (Salmonella dublin (strain CT_02021853)).